Reading from the N-terminus, the 538-residue chain is Protein BFR2 (538 aa).

The disordered stretch occupies residues 1–239 (MVKAKGRAKE…AKPMMAALST (239 aa)). Residues 7–23 (RAKEFQDPDEPITKDYD) are compositionally biased toward basic and acidic residues. Composition is skewed to acidic residues over residues 80-105 (LEEESASEEDDEEGSGDEEFDDPETA) and 172-222 (DSED…DEED). The stretch at 290 to 363 (YEAAEEAAIK…KWSRKVQSVN (74 aa)) forms a coiled coil.

This sequence belongs to the AATF family.

It localises to the nucleus. The protein resides in the nucleolus. The chain is Protein BFR2 (BFR2) from Gibberella zeae (strain ATCC MYA-4620 / CBS 123657 / FGSC 9075 / NRRL 31084 / PH-1) (Wheat head blight fungus).